The sequence spans 313 residues: ADP-L-glycero-D-manno-heptose-6-epimerase (313 aa).

Residues 10–11 (MI), 31–32 (DN), K38, K53, 75–79 (EGACS), and N92 each bind NADP(+). Y139 (proton acceptor) is an active-site residue. K143 contributes to the NADP(+) binding site. Residue N174 participates in substrate binding. V175 and K183 together coordinate NADP(+). K183 acts as the Proton acceptor in catalysis. Residues S185, H192, 206-209 (FEGS), R214, and Y277 contribute to the substrate site.

It belongs to the NAD(P)-dependent epimerase/dehydratase family. HldD subfamily. As to quaternary structure, homopentamer. NADP(+) is required as a cofactor.

The enzyme catalyses ADP-D-glycero-beta-D-manno-heptose = ADP-L-glycero-beta-D-manno-heptose. It participates in nucleotide-sugar biosynthesis; ADP-L-glycero-beta-D-manno-heptose biosynthesis; ADP-L-glycero-beta-D-manno-heptose from D-glycero-beta-D-manno-heptose 7-phosphate: step 4/4. In terms of biological role, catalyzes the interconversion between ADP-D-glycero-beta-D-manno-heptose and ADP-L-glycero-beta-D-manno-heptose via an epimerization at carbon 6 of the heptose. In Aliivibrio fischeri (strain MJ11) (Vibrio fischeri), this protein is ADP-L-glycero-D-manno-heptose-6-epimerase.